Here is a 146-residue protein sequence, read N- to C-terminus: MGFTEKQEALVNSSWELFKQNPSYSVLFYTIILKKAPAAKGMFSFLKDSAEVVDSPKLQAHAEKVFGMVHDSAIQLRASGEVVLGDVTLGAIHIQKGVIDPHFVVVKEALLDTIKEASGEKWSEELSTAWEIAYEGLASAIKKAMN.

In terms of domain architecture, Globin spans 2–146 (GFTEKQEALV…LASAIKKAMN (145 aa)). Nitrated tyrosine occurs at positions 24 and 29. S44 contacts heme b. Position 44 is a phosphoserine (S44). H61 contributes to the O2 binding site. Heme b-binding residues include K64, H93, and K96. Y134 is subject to Nitrated tyrosine.

The protein belongs to the plant globin family. In terms of assembly, monomer. Nitrated in effective nodules and particularly in hypoxic conditions; this mechanism may play a protective role in the symbiosis by buffering toxic peroxynitrite NO(2)(-). Nitration level decrease during nodule senescence. In terms of processing, phosphorylation at Ser-44 disrupts the molecular environment of its porphyrin ring oxygen binding pocket, thus leading to a reduced oxygen consumption and to the delivery of oxygen O(2) to symbiosomes. As to expression, root nodules.

It localises to the cytoplasm. It is found in the cytosol. Its subcellular location is the nucleus. Functionally, leghemoglobin that reversibly binds oxygen O(2) through a pentacoordinated heme iron. In root nodules, facilitates the diffusion of oxygen to the bacteroids while preventing the bacterial nitrogenase from being inactivated by buffering dioxygen, nitric oxide and carbon monoxide, and promoting the formation of reactive oxygen species (ROS, e.g. H(2)O(2)). This role is essential for symbiotic nitrogen fixation (SNF). This is Leghemoglobin Lb120-8 from Pisum sativum (Garden pea).